We begin with the raw amino-acid sequence, 305 residues long: tRNA dimethylallyltransferase (305 aa).

An ATP-binding site is contributed by 8 to 15 (GPTGTGKS). 10 to 15 (TGTGKS) contributes to the substrate binding site.

This sequence belongs to the IPP transferase family. As to quaternary structure, monomer. The cofactor is Mg(2+).

The catalysed reaction is adenosine(37) in tRNA + dimethylallyl diphosphate = N(6)-dimethylallyladenosine(37) in tRNA + diphosphate. Functionally, catalyzes the transfer of a dimethylallyl group onto the adenine at position 37 in tRNAs that read codons beginning with uridine, leading to the formation of N6-(dimethylallyl)adenosine (i(6)A). This chain is tRNA dimethylallyltransferase, found in Mycobacterium sp. (strain KMS).